The sequence spans 348 residues: Dihydroorotase (348 aa).

Residues histidine 14 and histidine 16 each coordinate Zn(2+). Residues 16–18 (HLR) and asparagine 42 each bind substrate. Lysine 100, histidine 137, and histidine 175 together coordinate Zn(2+). Residue lysine 100 is modified to N6-carboxylysine. Residue histidine 137 participates in substrate binding. Leucine 220 provides a ligand contact to substrate. Position 248 (aspartate 248) interacts with Zn(2+). Residue aspartate 248 is part of the active site. The substrate site is built by histidine 252 and alanine 264.

It belongs to the metallo-dependent hydrolases superfamily. DHOase family. Class II DHOase subfamily. Homodimer. It depends on Zn(2+) as a cofactor.

It carries out the reaction (S)-dihydroorotate + H2O = N-carbamoyl-L-aspartate + H(+). It functions in the pathway pyrimidine metabolism; UMP biosynthesis via de novo pathway; (S)-dihydroorotate from bicarbonate: step 3/3. Functionally, catalyzes the reversible cyclization of carbamoyl aspartate to dihydroorotate. The sequence is that of Dihydroorotase from Synechococcus sp. (strain CC9605).